The sequence spans 221 residues: Pre-rRNA-processing protein SRD1 (221 aa).

Residues 101-110 are compositionally biased toward polar residues; that stretch reads SKNRVTSACN. 2 disordered regions span residues 101–121 and 137–161; these read SKNR…QEAN and ASIT…TILP. Positions 142–155 are enriched in basic residues; it reads KYSKKTTSRPKREK. A GATA-type zinc finger spans residues 168-193; it reads CSKCKDTWTIQWRSGPDQNRELCSPC. The segment at 201–221 is disordered; sequence LKKENEKKRQAADKRIDRNNP. Basic and acidic residues predominate over residues 203 to 221; sequence KENEKKRQAADKRIDRNNP.

It localises to the cytoplasm. The protein resides in the nucleus. In terms of biological role, plays a direct or indirect role in pre-rRNA processing. The polypeptide is Pre-rRNA-processing protein SRD1 (SRD1) (Saccharomyces cerevisiae (strain ATCC 204508 / S288c) (Baker's yeast)).